The following is a 279-amino-acid chain: B3 domain-containing protein Os05g0481400 (279 aa).

The segment at 45 to 68 is disordered; sequence ARLQKSTRASPKPRKKFEVGATEV. The TF-B3 DNA-binding region spans 139-230; the sequence is FVKTMVRSHV…RFKIYIIKAV (92 aa). Acidic residues-rich tracts occupy residues 233–244 and 252–262; these read DANESEPADEEA and TEDAAEQDDSP. Positions 233-279 are disordered; that stretch reads DANESEPADEEAIGDKDTSTEDAAEQDDSPNAEPLKGTKRRKLRGRR. Over residues 269-279 the composition is skewed to basic residues; the sequence is GTKRRKLRGRR.

The protein localises to the nucleus. The polypeptide is B3 domain-containing protein Os05g0481400 (Oryza sativa subsp. japonica (Rice)).